Consider the following 246-residue polypeptide: Probable aquaporin AqpM (246 aa).

The Cytoplasmic portion of the chain corresponds to 1–12 (MTMTLAKRFTAE). The helical transmembrane segment at 13-33 (VVGTFILVFFGPGAAVITLMI) threads the bilayer. The Extracellular portion of the chain corresponds to 34 to 56 (ANGADKPNEFNIGIGALGGLGDW). A helical transmembrane segment spans residues 57–77 (FAIGMAFALAIAAVIYSLGRI). The Cytoplasmic segment spans residues 78-104 (SGAHINPAVTIALWSIGRFPGREVVPY). The NPA 1 motif lies at 83 to 85 (NPA). Residues 105–125 (IVAQFIGAALGSLLFLACVGP) traverse the membrane as a helical segment. Residues 126 to 146 (AAATVGGLGATAPFPGIGYGQ) lie on the Extracellular side of the membrane. The helical transmembrane segment at 147–167 (AILTEAIGTFLLMLVIMGVAV) threads the bilayer. The Cytoplasmic segment spans residues 168 to 173 (DERAPP). A helical membrane pass occupies residues 174–194 (GFAGLVIGLTVGGIITTIGNI). At 195–217 (TGSSLNPARTFGPYLGDSLMGIN) the chain is on the extracellular side. Positions 200-202 (NPA) match the NPA 2 motif. The chain crosses the membrane as a helical span at residues 218 to 238 (LWQYFPIYVIGPIVGAVAAAW). At 239 to 246 (LYNYLAKE) the chain is on the cytoplasmic side.

This sequence belongs to the MIP/aquaporin (TC 1.A.8) family.

It is found in the cell membrane. Functionally, channel that permits osmotically driven movement of water in both directions. The protein is Probable aquaporin AqpM (aqpM) of Archaeoglobus fulgidus (strain ATCC 49558 / DSM 4304 / JCM 9628 / NBRC 100126 / VC-16).